The following is a 1956-amino-acid chain: Histone-lysine N-methyltransferase SETD1B (1956 aa).

Residues 1-20 are compositionally biased toward basic and acidic residues; the sequence is MSFKEAKPGERGKNPEDHGR. The disordered stretch occupies residues 1-46; sequence MSFKEAKPGERGKNPEDHGRKQTASWINGMEAGNQPSTSGEKKSHH. An RRM domain is found at 111–199; the sequence is DEFYVGPVPP…NIIHVELDTK (89 aa). Disordered regions lie at residues 226–478, 502–637, 662–696, 926–1148, 1341–1386, 1420–1464, 1512–1553, 1627–1655, and 1766–1790; these read LDAS…LEAE, IAGD…VTPS, GFPP…VTVP, KEPP…DEMQ, EDLP…TLTS, PTFP…VPSP, HLTS…NYET, TKHK…FSPP, and IDTQ…RRSE. Polar residues-rich tracts occupy residues 254–290, 298–312, and 346–361; these read VTPN…QGTP, PFSQ…QTTP, and SSGS…NVTR. Residues 363-373 show a composition bias toward pro residues; sequence QPEPVQVPRTP. Composition is skewed to polar residues over residues 375–407, 416–432, and 451–464; these read LSHS…PQTS, GPQT…NSAS, and DSTT…SQTP. Residues 517 to 527 are compositionally biased toward low complexity; it reads SPISSSSSQLS. 2 stretches are compositionally biased toward polar residues: residues 535–551 and 575–593; these read GSRY…SSTG and SLCQ…NQSG. The span at 594-605 shows a compositional bias: basic and acidic residues; the sequence is RKTESLDKKELV. Residues 625 to 634 are compositionally biased toward acidic residues; that stretch reads EDMEISDDEV. Over residues 986–1000 the composition is skewed to acidic residues; that stretch reads SEGEEEVESEGDDGE. Over residues 1001-1011 the composition is skewed to basic and acidic residues; the sequence is TSDKEDSSSEK. A compositionally biased stretch (acidic residues) spans 1068–1122; it reads DSSDESEESSEYESSSDSDEKEEEDDEEEELVFGDDQSEDQDLGQEYEVETDREE. Residues 1341 to 1352 are compositionally biased toward basic and acidic residues; it reads EDLPRTPGRDIV. Polar residues-rich tracts occupy residues 1358–1367 and 1450–1462; these read LGKSQSTETV and EPTS…NSVP. Basic and acidic residues predominate over residues 1541-1551; it reads SAHEFETEKNY. Residues 1628–1638 are compositionally biased toward basic residues; it reads KHKKSRNSRHN. Residues 1769 to 1783 are compositionally biased toward polar residues; the sequence is QGKSIPAQPQASTRA. The RxxxRR motif motif lies at 1788–1793; sequence RSEQRR. The SET domain maps to 1817-1934; sequence KKLRFCKSHI…VNEEITYDYK (118 aa). S-adenosyl-L-methionine is bound at residue Tyr1933. A Post-SET domain is found at 1940–1956; the sequence is VKIPCLCGAENCRGTLN.

The protein belongs to the class V-like SAM-binding methyltransferase superfamily. As to quaternary structure, component of the SET1B/COMPASS complex.

It is found in the nucleus speckle. Its subcellular location is the chromosome. The catalysed reaction is L-lysyl(4)-[histone H3] + 3 S-adenosyl-L-methionine = N(6),N(6),N(6)-trimethyl-L-lysyl(4)-[histone H3] + 3 S-adenosyl-L-homocysteine + 3 H(+). Its function is as follows. Histone methyltransferase that specifically methylates 'Lys-4' of histone H3, when part of the SET1 histone methyltransferase (HMT) complex, but not if the neighboring 'Lys-9' residue is already methylated. H3 'Lys-4' methylation represents a specific tag for epigenetic transcriptional activation. This Xenopus tropicalis (Western clawed frog) protein is Histone-lysine N-methyltransferase SETD1B (setd1b).